The sequence spans 218 residues: N-(5'-phosphoribosyl)anthranilate isomerase (218 aa).

The protein belongs to the TrpF family.

It catalyses the reaction N-(5-phospho-beta-D-ribosyl)anthranilate = 1-(2-carboxyphenylamino)-1-deoxy-D-ribulose 5-phosphate. It participates in amino-acid biosynthesis; L-tryptophan biosynthesis; L-tryptophan from chorismate: step 3/5. The sequence is that of N-(5'-phosphoribosyl)anthranilate isomerase from Halalkalibacterium halodurans (strain ATCC BAA-125 / DSM 18197 / FERM 7344 / JCM 9153 / C-125) (Bacillus halodurans).